Here is a 277-residue protein sequence, read N- to C-terminus: Cell division protein ZipA (277 aa).

Topologically, residues 1 to 5 (MQDLR) are periplasmic. A helical transmembrane segment spans residues 6–26 (LMLLLFGVITIIVLFLHGVWA). At 27–277 (RRKERSALFY…NALIRSTPHL (251 aa)) the chain is on the cytoplasmic side. The tract at residues 120-139 (QKKSDDLSHQSKETHHPSIQ) is disordered.

It belongs to the ZipA family. In terms of assembly, interacts with FtsZ via their C-terminal domains.

The protein localises to the cell inner membrane. Essential cell division protein that stabilizes the FtsZ protofilaments by cross-linking them and that serves as a cytoplasmic membrane anchor for the Z ring. Also required for the recruitment to the septal ring of downstream cell division proteins. The sequence is that of Cell division protein ZipA from Hamiltonella defensa subsp. Acyrthosiphon pisum (strain 5AT).